The sequence spans 86 residues: Acyl-CoA-binding protein homolog 1 (86 aa).

In terms of domain architecture, ACB spans 1–86; the sequence is MTLSFDDAAA…VEELIAKYGA (86 aa). Residues lysine 13, 28–32, lysine 50, lysine 54, and tyrosine 73 each bind an acyl-CoA; that span reads YALFK.

Belongs to the ACBP family.

In terms of biological role, binds medium- and long-chain acyl-CoA esters with very high affinity and may function as an intracellular carrier of acyl-CoA esters. The sequence is that of Acyl-CoA-binding protein homolog 1 (acbp-1) from Caenorhabditis elegans.